Reading from the N-terminus, the 683-residue chain is Tripartite terminase subunit 3 (683 aa).

A Walker A motif motif is present at residues 217 to 224 (IPRRHGKT). Positions 312-317 (LLYIDE) match the Walker B motif motif. The active-site For ATPase activity is E317. Residues D472, E546, and D658 each act as for nuclease activity in the active site.

The protein belongs to the herpesviridae TRM3 protein family. In terms of assembly, interacts with the terminase subunits TRM1 and TRM2. Interacts with portal protein.

It localises to the host nucleus. Functionally, component of the molecular motor that translocates viral genomic DNA in empty capsid during DNA packaging. Forms a tripartite terminase complex together with TRM1 and TRM2 in the host cytoplasm. Once the complex reaches the host nucleus, it interacts with the capsid portal vertex. This portal forms a ring in which genomic DNA is translocated into the capsid. TRM3 carries an RNase H-like nuclease activity that plays an important role for the cleavage of concatemeric viral DNA into unit length genomes. The protein is Tripartite terminase subunit 3 of Saimiri sciureus (Common squirrel monkey).